A 441-amino-acid chain; its full sequence is Homogentisate 1,2-dioxygenase (441 aa).

Residue His297 is the Proton acceptor of the active site. His340 and Glu346 together coordinate Fe cation. Residues Tyr355 and His376 each coordinate homogentisate. His376 contacts Fe cation.

It belongs to the homogentisate dioxygenase family. As to quaternary structure, hexamer; dimer of trimers. The cofactor is Fe cation.

The enzyme catalyses homogentisate + O2 = 4-maleylacetoacetate + H(+). It participates in amino-acid degradation; L-phenylalanine degradation; acetoacetate and fumarate from L-phenylalanine: step 4/6. Functionally, involved in the catabolism of homogentisate (2,5-dihydroxyphenylacetate or 2,5-OH-PhAc), a central intermediate in the degradation of phenylalanine and tyrosine. Catalyzes the oxidative ring cleavage of the aromatic ring of homogentisate to yield maleylacetoacetate. The chain is Homogentisate 1,2-dioxygenase from Streptomyces coelicolor (strain ATCC BAA-471 / A3(2) / M145).